The sequence spans 57 residues: Potassium channel toxin alpha-KTx 8.5 (57 aa).

A signal peptide spans 1 to 28 (MSRLYAIILIALVLNVIMTIMPDSKVEA). Cystine bridges form between Cys31-Cys47, Cys34-Cys52, and Cys38-Cys54.

The protein belongs to the short scorpion toxin superfamily. Potassium channel inhibitor family. Alpha-KTx 08 subfamily. In terms of tissue distribution, expressed by the venom gland.

The protein resides in the secreted. In terms of biological role, selectively inhibits voltage-gated potassium channels Kv1.2/KCNA2 (IC(50)=183 nM). This is Potassium channel toxin alpha-KTx 8.5 from Odontobuthus doriae (Yellow Iranian scorpion).